The chain runs to 338 residues: Aspartate carbamoyltransferase catalytic subunit (338 aa).

Residues R59 and T60 each coordinate carbamoyl phosphate. K87 contacts L-aspartate. Carbamoyl phosphate is bound by residues R109, H142, and Q145. L-aspartate is bound by residues R182 and R253. Positions 294 and 295 each coordinate carbamoyl phosphate.

This sequence belongs to the aspartate/ornithine carbamoyltransferase superfamily. ATCase family. Heterododecamer (2C3:3R2) of six catalytic PyrB chains organized as two trimers (C3), and six regulatory PyrI chains organized as three dimers (R2).

It carries out the reaction carbamoyl phosphate + L-aspartate = N-carbamoyl-L-aspartate + phosphate + H(+). It functions in the pathway pyrimidine metabolism; UMP biosynthesis via de novo pathway; (S)-dihydroorotate from bicarbonate: step 2/3. In terms of biological role, catalyzes the condensation of carbamoyl phosphate and aspartate to form carbamoyl aspartate and inorganic phosphate, the committed step in the de novo pyrimidine nucleotide biosynthesis pathway. This chain is Aspartate carbamoyltransferase catalytic subunit, found in Prochlorococcus marinus (strain MIT 9515).